The following is an 88-amino-acid chain: Putative regulatory protein PCC7424_3427 (88 aa).

Belongs to the RemA family.

In Gloeothece citriformis (strain PCC 7424) (Cyanothece sp. (strain PCC 7424)), this protein is Putative regulatory protein PCC7424_3427.